An 89-amino-acid polypeptide reads, in one-letter code: Small ribosomal subunit protein uS15 (89 aa).

This sequence belongs to the universal ribosomal protein uS15 family. Part of the 30S ribosomal subunit. Forms a bridge to the 50S subunit in the 70S ribosome, contacting the 23S rRNA.

One of the primary rRNA binding proteins, it binds directly to 16S rRNA where it helps nucleate assembly of the platform of the 30S subunit by binding and bridging several RNA helices of the 16S rRNA. In terms of biological role, forms an intersubunit bridge (bridge B4) with the 23S rRNA of the 50S subunit in the ribosome. The polypeptide is Small ribosomal subunit protein uS15 (Haemophilus influenzae (strain PittGG)).